Consider the following 648-residue polypeptide: Actin-related protein 5 (648 aa).

Residues 34–59 (LTKPRKDRKKEAAASEGSASQTTVEQ) are disordered. 2 coiled-coil regions span residues 277-311 (TAEQ…EQQL) and 340-364 (TLED…RAQS). 2 disordered regions span residues 357-385 (RAQE…PEGM) and 403-455 (GRKQ…GMND). Over residues 414-428 (EQAKRHTHAAQERMR) the composition is skewed to basic and acidic residues. 2 positions are modified to phosphoserine: S471 and S473.

Belongs to the actin family. ARP5 subfamily. As to quaternary structure, component of the chromatin remodeling Ino80 complex.

It is found in the nucleus. Proposed core component of the chromatin remodeling Ino80 complex which is involved in transcriptional regulation, DNA replication and probably DNA repair. This Drosophila melanogaster (Fruit fly) protein is Actin-related protein 5.